A 387-amino-acid chain; its full sequence is Anhydro-N-acetylmuramic acid kinase (387 aa).

17-24 (GTSMDGVD) is an ATP binding site.

Belongs to the anhydro-N-acetylmuramic acid kinase family.

It carries out the reaction 1,6-anhydro-N-acetyl-beta-muramate + ATP + H2O = N-acetyl-D-muramate 6-phosphate + ADP + H(+). It functions in the pathway amino-sugar metabolism; 1,6-anhydro-N-acetylmuramate degradation. The protein operates within cell wall biogenesis; peptidoglycan recycling. Catalyzes the specific phosphorylation of 1,6-anhydro-N-acetylmuramic acid (anhMurNAc) with the simultaneous cleavage of the 1,6-anhydro ring, generating MurNAc-6-P. Is required for the utilization of anhMurNAc either imported from the medium or derived from its own cell wall murein, and thus plays a role in cell wall recycling. The chain is Anhydro-N-acetylmuramic acid kinase from Burkholderia pseudomallei (strain K96243).